The sequence spans 200 residues: Holliday junction branch migration complex subunit RuvA (200 aa).

Residues 1–64 (MLSYLSGTLI…EDALQLYGFI (64 aa)) are domain I. The segment at 65-143 (TTEDREVFKL…KLDLKIDIKE (79 aa)) is domain II. The flexible linker stretch occupies residues 144-148 (TAFRS). Positions 149 to 200 (DKQQVRNDAYSALISLGFTKSIAEKAMRAAIAEVPDGSVDDLIRVALRHVQS) are domain III.

Belongs to the RuvA family. Homotetramer. Forms an RuvA(8)-RuvB(12)-Holliday junction (HJ) complex. HJ DNA is sandwiched between 2 RuvA tetramers; dsDNA enters through RuvA and exits via RuvB. An RuvB hexamer assembles on each DNA strand where it exits the tetramer. Each RuvB hexamer is contacted by two RuvA subunits (via domain III) on 2 adjacent RuvB subunits; this complex drives branch migration. In the full resolvosome a probable DNA-RuvA(4)-RuvB(12)-RuvC(2) complex forms which resolves the HJ.

The protein resides in the cytoplasm. Its function is as follows. The RuvA-RuvB-RuvC complex processes Holliday junction (HJ) DNA during genetic recombination and DNA repair, while the RuvA-RuvB complex plays an important role in the rescue of blocked DNA replication forks via replication fork reversal (RFR). RuvA specifically binds to HJ cruciform DNA, conferring on it an open structure. The RuvB hexamer acts as an ATP-dependent pump, pulling dsDNA into and through the RuvAB complex. HJ branch migration allows RuvC to scan DNA until it finds its consensus sequence, where it cleaves and resolves the cruciform DNA. This is Holliday junction branch migration complex subunit RuvA from Chloroherpeton thalassium (strain ATCC 35110 / GB-78).